Consider the following 710-residue polypeptide: Interferon-induced GTP-binding protein Mx2 (710 aa).

Residues 1-51 (MSMSFRPLKYKRHTQTSTQHHPKQDIYFHQQPPGPPLGQTMSPPQWQVEES) form a disordered region. Over residues 39-50 (QTMSPPQWQVEE) the composition is skewed to polar residues. Residues 112–383 (DLALPAIAVI…LIWHINKSLP (272 aa)) form the Dynamin-type G domain. The interval 122–129 (GDQSSGKS) is G1 motif. GTP is bound at residue 122–129 (GDQSSGKS). The tract at residues 147–149 (ITR) is G2 motif. The tract at residues 221–224 (DLPG) is G3 motif. Residues 221–225 (DLPGI) and 290–293 (TKPD) each bind GTP. A G4 motif region spans residues 290–293 (TKPD). A G5 motif region spans residues 322 to 325 (KCRG). The region spanning 619–710 (IVEIGVHLNA…ALYEFPHFKG (92 aa)) is the GED domain.

This sequence belongs to the TRAFAC class dynamin-like GTPase superfamily. Dynamin/Fzo/YdjA family.

The protein resides in the cytoplasm. It is found in the nucleus. Functionally, interferon-induced dynamin-like GTPase with antiviral activity against vesicular stomatitis virus (VSV). The sequence is that of Interferon-induced GTP-binding protein Mx2 (MX2) from Bos taurus (Bovine).